A 230-amino-acid chain; its full sequence is Phosphoglycolate phosphatase (230 aa).

Asp9 serves as the catalytic Nucleophile. Mg(2+)-binding residues include Asp9, Asp11, and Asp175.

The protein belongs to the HAD-like hydrolase superfamily. CbbY/CbbZ/Gph/YieH family. Mg(2+) is required as a cofactor.

The catalysed reaction is 2-phosphoglycolate + H2O = glycolate + phosphate. It participates in organic acid metabolism; glycolate biosynthesis; glycolate from 2-phosphoglycolate: step 1/1. Specifically catalyzes the dephosphorylation of 2-phosphoglycolate. Is involved in the dissimilation of the intracellular 2-phosphoglycolate formed during the DNA repair of 3'-phosphoglycolate ends, a major class of DNA lesions induced by oxidative stress. The protein is Phosphoglycolate phosphatase of Psychrobacter arcticus (strain DSM 17307 / VKM B-2377 / 273-4).